The chain runs to 383 residues: tRNA-specific 2-thiouridylase MnmA (383 aa).

ATP is bound by residues 9 to 16 (GMSGGVDS) and Met-35. The interaction with target base in tRNA stretch occupies residues 95–97 (NPD). Catalysis depends on Cys-100, which acts as the Nucleophile. The cysteines at positions 100 and 198 are disulfide-linked. Gly-124 is an ATP binding site. An interaction with tRNA region spans residues 148 to 150 (KDQ). Cys-198 acts as the Cysteine persulfide intermediate in catalysis. The segment at 310-311 (RY) is interaction with tRNA.

This sequence belongs to the MnmA/TRMU family.

It localises to the cytoplasm. The enzyme catalyses S-sulfanyl-L-cysteinyl-[protein] + uridine(34) in tRNA + AH2 + ATP = 2-thiouridine(34) in tRNA + L-cysteinyl-[protein] + A + AMP + diphosphate + H(+). Catalyzes the 2-thiolation of uridine at the wobble position (U34) of tRNA, leading to the formation of s(2)U34. This is tRNA-specific 2-thiouridylase MnmA from Paraburkholderia phytofirmans (strain DSM 17436 / LMG 22146 / PsJN) (Burkholderia phytofirmans).